The following is a 142-amino-acid chain: Hemoglobin subunit alpha-1 (142 aa).

N-acetylserine is present on serine 1. The Globin domain maps to 1–142; it reads SLSVKDKAAV…VALALAERYR (142 aa). Histidine 59 is a binding site for O2. Histidine 88 lines the heme b pocket.

Belongs to the globin family. In terms of assembly, hb 1 is a heterotetramer of two alpha-1 and two beta-1 chains. In terms of tissue distribution, red blood cells.

Its function is as follows. Involved in oxygen transport from gills to the various peripheral tissues. This Gobionotothen gibberifrons (Humped rockcod) protein is Hemoglobin subunit alpha-1 (hba1).